The chain runs to 415 residues: Multidrug resistance protein MdtA (415 aa).

Residues 1-21 (MKGSYKSRWVIVIVVVIAAIA) form the signal peptide. 2 disordered regions span residues 32–60 (SRSA…GPLA) and 392–415 (EAQS…GARS). Positions 399 to 415 (PEEKATSREYAKKGARS) are enriched in basic and acidic residues.

The protein belongs to the membrane fusion protein (MFP) (TC 8.A.1) family. In terms of assembly, part of a tripartite efflux system composed of MdtA, MdtB and MdtC.

Its subcellular location is the cell inner membrane. In terms of biological role, the MdtABC tripartite complex confers resistance against novobiocin and deoxycholate. The chain is Multidrug resistance protein MdtA from Escherichia coli (strain 55989 / EAEC).